A 330-amino-acid polypeptide reads, in one-letter code: DNA-directed RNA polymerase subunit alpha (330 aa).

Residues Met1 to Lys235 are alpha N-terminal domain (alpha-NTD). Positions Ile270 to Lys330 are alpha C-terminal domain (alpha-CTD).

The protein belongs to the RNA polymerase alpha chain family. In plastids the minimal PEP RNA polymerase catalytic core is composed of four subunits: alpha, beta, beta', and beta''. When a (nuclear-encoded) sigma factor is associated with the core the holoenzyme is formed, which can initiate transcription.

It is found in the plastid. The protein resides in the chloroplast. The enzyme catalyses RNA(n) + a ribonucleoside 5'-triphosphate = RNA(n+1) + diphosphate. Functionally, DNA-dependent RNA polymerase catalyzes the transcription of DNA into RNA using the four ribonucleoside triphosphates as substrates. In Gossypium barbadense (Sea Island cotton), this protein is DNA-directed RNA polymerase subunit alpha (rpoA).